Reading from the N-terminus, the 302-residue chain is Aliphatic sulfonates import ATP-binding protein SsuB (302 aa).

Residues proline 30–alanine 57 are compositionally biased toward low complexity. The tract at residues proline 30–alanine 65 is disordered. The region spanning isoleucine 70–leucine 284 is the ABC transporter domain. Position 102-109 (glycine 102–serine 109) interacts with ATP.

It belongs to the ABC transporter superfamily. Aliphatic sulfonates importer (TC 3.A.1.17.2) family. In terms of assembly, the complex is composed of two ATP-binding proteins (SsuB), two transmembrane proteins (SsuC) and a solute-binding protein (SsuA).

It is found in the cell membrane. It carries out the reaction ATP + H2O + aliphatic sulfonate-[sulfonate-binding protein]Side 1 = ADP + phosphate + aliphatic sulfonateSide 2 + [sulfonate-binding protein]Side 1.. In terms of biological role, part of the ABC transporter complex SsuABC involved in aliphatic sulfonates import. Responsible for energy coupling to the transport system. This chain is Aliphatic sulfonates import ATP-binding protein SsuB, found in Frankia casuarinae (strain DSM 45818 / CECT 9043 / HFP020203 / CcI3).